Here is a 525-residue protein sequence, read N- to C-terminus: Acyl-lipid (9-3)-desaturase (525 aa).

The Cytochrome b5 heme-binding domain maps to 102-176; it reads KSTHPLSEVA…LQDFYIGDVE (75 aa). Heme is bound by residues H137 and H159. Residues 216–236 traverse the membrane as a helical segment; the sequence is VAIFAASIAIICWSKTISAVL. Positions 254 to 258 match the Histidine box-1 motif; that stretch reads HDFLH. A helical transmembrane segment spans residues 266 to 286; the sequence is WLNEVVGYVIGNAVLGFSTGW. The short motif at 291 to 295 is the Histidine box-2 element; it reads HNLHH. Transmembrane regions (helical) follow at residues 340–360, 378–398, and 401–421; these read QHLFFMGLLFFARGSWLFWSW, GTVLFHYFWFVGTACYLLPGW, and LVWMAVTELMSGMLLGFVFVL. Positions 462–466 match the Histidine box-3 motif; the sequence is QIEHH.

The protein belongs to the fatty acid desaturase type 1 family.

It localises to the membrane. It catalyses the reaction (9Z,12Z,15Z)-octadecatrienoyl-containing glycerolipid + 2 Fe(II)-[cytochrome b5] + O2 + 2 H(+) = (6Z,9Z,12Z,15Z)-octadecatetraenoyl-containing glycerolipid + 2 Fe(III)-[cytochrome b5] + 2 H2O. It carries out the reaction a (9Z,12Z)-octadecadienoyl-containing glycerolipid + 2 Fe(II)-[cytochrome b5] + O2 + 2 H(+) = (6Z,9Z,12Z)-octadecatrienoyl-containing glycerolipid + 2 Fe(III)-[cytochrome b5] + 2 H2O. It participates in lipid metabolism; polyunsaturated fatty acid biosynthesis. Fatty acid desaturase able to introduce a delta(6)-double bond into delta(9)-unsaturated fatty-acid substrates. Can use both linoleic acid (18:2(9Z,12Z)) and alpha-linolenic acid (18:3(9Z,12Z,15Z)) as substrates. Required for the biosynthesis of arachidonic acid (20:4(5z,8Z,11Z,14Z)). This Physcomitrium patens (Spreading-leaved earth moss) protein is Acyl-lipid (9-3)-desaturase.